The primary structure comprises 690 residues: Elongation factor G (690 aa).

The region spanning E8–L282 is the tr-type G domain. Residues A17–T24, D81–H85, and N135–D138 contribute to the GTP site.

It belongs to the TRAFAC class translation factor GTPase superfamily. Classic translation factor GTPase family. EF-G/EF-2 subfamily.

The protein resides in the cytoplasm. Functionally, catalyzes the GTP-dependent ribosomal translocation step during translation elongation. During this step, the ribosome changes from the pre-translocational (PRE) to the post-translocational (POST) state as the newly formed A-site-bound peptidyl-tRNA and P-site-bound deacylated tRNA move to the P and E sites, respectively. Catalyzes the coordinated movement of the two tRNA molecules, the mRNA and conformational changes in the ribosome. In Alkaliphilus oremlandii (strain OhILAs) (Clostridium oremlandii (strain OhILAs)), this protein is Elongation factor G.